The chain runs to 128 residues: Protein Wnt-8 (128 aa).

S1 carries O-palmitoleoyl serine lipidation. Disulfide bonds link C71/C109 and C87/C102. N-linked (GlcNAc...) asparagine glycosylation is found at N74 and N93.

This sequence belongs to the Wnt family. Palmitoleoylation is required for efficient binding to frizzled receptors. Depalmitoleoylation leads to Wnt signaling pathway inhibition. Post-translationally, proteolytic processing by tiki1 and tiki2 promotes oxidation and formation of large disulfide-bond oligomers, leading to inactivation of wnt8.

It localises to the secreted. The protein resides in the extracellular space. Its subcellular location is the extracellular matrix. Functionally, ligand for members of the frizzled family of seven transmembrane receptors. Probable developmental protein. May be a signaling molecule which affects the development of discrete regions of tissues. Is likely to signal over only few cell diameters. In Thunnus thynnus (Atlantic bluefin tuna), this protein is Protein Wnt-8 (wnt8).